The chain runs to 715 residues: uncharacterized protein (715 aa).

This is an uncharacterized protein from Mycobacterium tuberculosis (strain CDC 1551 / Oshkosh).